The chain runs to 304 residues: Glutaminase (304 aa).

Substrate contacts are provided by Ser63, Asn114, Glu158, Asn165, Tyr189, Tyr240, and Val258.

The protein belongs to the glutaminase family. As to quaternary structure, homotetramer.

It catalyses the reaction L-glutamine + H2O = L-glutamate + NH4(+). The polypeptide is Glutaminase (Shewanella loihica (strain ATCC BAA-1088 / PV-4)).